The sequence spans 173 residues: Crossover junction endodeoxyribonuclease RuvC (173 aa).

Active-site residues include aspartate 8, glutamate 67, and aspartate 139. Aspartate 8, glutamate 67, and aspartate 139 together coordinate Mg(2+).

It belongs to the RuvC family. In terms of assembly, homodimer which binds Holliday junction (HJ) DNA. The HJ becomes 2-fold symmetrical on binding to RuvC with unstacked arms; it has a different conformation from HJ DNA in complex with RuvA. In the full resolvosome a probable DNA-RuvA(4)-RuvB(12)-RuvC(2) complex forms which resolves the HJ. Requires Mg(2+) as cofactor.

It localises to the cytoplasm. It catalyses the reaction Endonucleolytic cleavage at a junction such as a reciprocal single-stranded crossover between two homologous DNA duplexes (Holliday junction).. The RuvA-RuvB-RuvC complex processes Holliday junction (HJ) DNA during genetic recombination and DNA repair. Endonuclease that resolves HJ intermediates. Cleaves cruciform DNA by making single-stranded nicks across the HJ at symmetrical positions within the homologous arms, yielding a 5'-phosphate and a 3'-hydroxyl group; requires a central core of homology in the junction. The consensus cleavage sequence is 5'-(A/T)TT(C/G)-3'. Cleavage occurs on the 3'-side of the TT dinucleotide at the point of strand exchange. HJ branch migration catalyzed by RuvA-RuvB allows RuvC to scan DNA until it finds its consensus sequence, where it cleaves and resolves the cruciform DNA. The chain is Crossover junction endodeoxyribonuclease RuvC from Yersinia enterocolitica serotype O:8 / biotype 1B (strain NCTC 13174 / 8081).